The chain runs to 170 residues: dCTP pyrophosphatase 1 (170 aa).

Residues 1-25 (MSTAGDGERGTVGQEDSAAARPFRF) form a disordered region. At serine 2 the chain carries N-acetylserine. At serine 2 the chain carries Phosphoserine. Substrate is bound by residues histidine 38 and 47–51 (WEQFH). Residues glutamate 63 and glutamate 66 each contribute to the Mg(2+) site. Position 73 (tryptophan 73) interacts with substrate. The Mg(2+) site is built by glutamate 95 and aspartate 98. Tyrosine 102 contacts substrate. The interval 150 to 170 (SENQAVGAGDPASELRDQAST) is disordered.

In terms of assembly, homotetramer. Mg(2+) serves as cofactor. In terms of tissue distribution, ubiquitous. Highly expressed in heart, liver, skeletal muscle, cerebellum, brain, and salivary gland.

It localises to the cytoplasm. The protein resides in the cytosol. It carries out the reaction dCTP + H2O = dCMP + diphosphate + H(+). Its activity is regulated as follows. Inhibited by divalent calcium or cadmium ions. Its function is as follows. Hydrolyzes deoxynucleoside triphosphates (dNTPs) to the corresponding nucleoside monophosphates. Has a strong preference for dCTP and its analogs including 5-iodo-dCTP and 5-methyl-dCTP for which it may even have a higher efficiency. May protect DNA or RNA against the incorporation of these genotoxic nucleotide analogs through their catabolism. The protein is dCTP pyrophosphatase 1 of Mus musculus (Mouse).